The following is a 289-amino-acid chain: Pantothenate synthetase (289 aa).

30–37 (MGYLHEGH) provides a ligand contact to ATP. His37 serves as the catalytic Proton donor. (R)-pantoate is bound at residue Gln61. Gln61 is a binding site for beta-alanine. 147–150 (GLKD) is a binding site for ATP. Residue Gln153 participates in (R)-pantoate binding. ATP is bound by residues Val176 and 184-187 (KSSR).

This sequence belongs to the pantothenate synthetase family. Homodimer.

The protein resides in the cytoplasm. It carries out the reaction (R)-pantoate + beta-alanine + ATP = (R)-pantothenate + AMP + diphosphate + H(+). Its pathway is cofactor biosynthesis; (R)-pantothenate biosynthesis; (R)-pantothenate from (R)-pantoate and beta-alanine: step 1/1. Functionally, catalyzes the condensation of pantoate with beta-alanine in an ATP-dependent reaction via a pantoyl-adenylate intermediate. The protein is Pantothenate synthetase of Geobacillus thermodenitrificans (strain NG80-2).